The primary structure comprises 332 residues: Putative ketol-acid reductoisomerase 3 (332 aa).

Positions 1–182 (MDKTVLDASL…AIPGGIAVIS (182 aa)) constitute a KARI N-terminal Rossmann domain. A KARI C-terminal knotted domain is found at 183-329 (SFEEEALLDL…KELYKILRRK (147 aa)).

It belongs to the ketol-acid reductoisomerase family.

The enzyme catalyses (2R)-2,3-dihydroxy-3-methylbutanoate + NADP(+) = (2S)-2-acetolactate + NADPH + H(+). It catalyses the reaction (2R,3R)-2,3-dihydroxy-3-methylpentanoate + NADP(+) = (S)-2-ethyl-2-hydroxy-3-oxobutanoate + NADPH + H(+). Its pathway is amino-acid biosynthesis; L-isoleucine biosynthesis; L-isoleucine from 2-oxobutanoate: step 2/4. It functions in the pathway amino-acid biosynthesis; L-valine biosynthesis; L-valine from pyruvate: step 2/4. This chain is Putative ketol-acid reductoisomerase 3 (ilvC3), found in Saccharolobus solfataricus (strain ATCC 35092 / DSM 1617 / JCM 11322 / P2) (Sulfolobus solfataricus).